Reading from the N-terminus, the 204-residue chain is Vacuolar protein-sorting-associated protein 46 (204 aa).

Residues M1–M103 are interaction with VSP24. S5 is modified (phosphoserine). Coiled-coil stretches lie at residues L9–A56 and N109–L129. The interval D104 to G204 is interaction with VSP4. The segment at N176–G204 is interaction with VTA1. Basic and acidic residues predominate over residues V185–A196. The segment at V185 to G204 is disordered.

Belongs to the SNF7 family. In terms of assembly, self-associates. Interacts with VPS4 and VTA1. Interacts with IST1.

The protein resides in the endosome membrane. It localises to the endomembrane system. Class E VPS protein implicated in concentration and sorting of cargo proteins of the multivesicular body (MVB) for incorporation into intralumenal vesicles. The lumenal sequestrated membrane proteins will be targeted into the vacuole after fusion of the endosome with the vacuole. Probably acts as a peripherally associated component of the ESCRT-III complex, which appears to be critical for late steps in MVB sorting, such as membrane invagination and final cargo sorting and recruits late-acting components of the sorting machinery. The MVB pathway requires the sequential function of ESCRT-O, -I,-II and -III complex assemblies. Regulates the membrane association of VPS4. Can stimulate VPS4 ATPase activity directly or via VTA1. The protein is Vacuolar protein-sorting-associated protein 46 (DID2) of Saccharomyces cerevisiae (strain ATCC 204508 / S288c) (Baker's yeast).